The following is a 207-amino-acid chain: Negative modulator of initiation of replication (207 aa).

Residues 43 to 54 (ATPITSSVTPSA) show a composition bias toward polar residues. The segment at 43–63 (ATPITSSVTPSAPRQEAVNDE) is disordered.

The protein belongs to the SeqA family. As to quaternary structure, homodimer. Polymerizes to form helical filaments.

The protein localises to the cytoplasm. Functionally, negative regulator of replication initiation, which contributes to regulation of DNA replication and ensures that replication initiation occurs exactly once per chromosome per cell cycle. Binds to pairs of hemimethylated GATC sequences in the oriC region, thus preventing assembly of replication proteins and re-initiation at newly replicated origins. Repression is relieved when the region becomes fully methylated. In Psychromonas ingrahamii (strain DSM 17664 / CCUG 51855 / 37), this protein is Negative modulator of initiation of replication.